The following is a 707-amino-acid chain: DNA ligase (707 aa).

NAD(+)-binding positions include 48 to 52, 97 to 98, and glutamate 134; these read DAEYD and SI. Lysine 136 (N6-AMP-lysine intermediate) is an active-site residue. NAD(+) is bound by residues arginine 157, glutamate 193, lysine 320, and lysine 344. 4 residues coordinate Zn(2+): cysteine 438, cysteine 441, cysteine 456, and cysteine 462. The BRCT domain occupies 621-707; the sequence is VAPKPLSGKT…DSPPDERIPA (87 aa).

Belongs to the NAD-dependent DNA ligase family. LigA subfamily. Mg(2+) is required as a cofactor. It depends on Mn(2+) as a cofactor.

The catalysed reaction is NAD(+) + (deoxyribonucleotide)n-3'-hydroxyl + 5'-phospho-(deoxyribonucleotide)m = (deoxyribonucleotide)n+m + AMP + beta-nicotinamide D-nucleotide.. Functionally, DNA ligase that catalyzes the formation of phosphodiester linkages between 5'-phosphoryl and 3'-hydroxyl groups in double-stranded DNA using NAD as a coenzyme and as the energy source for the reaction. It is essential for DNA replication and repair of damaged DNA. In Polaromonas naphthalenivorans (strain CJ2), this protein is DNA ligase.